The sequence spans 198 residues: Glycerol-3-phosphate acyltransferase (198 aa).

5 helical membrane-spanning segments follow: residues 6–26 (FLPV…GLIL), 55–75 (GLAA…VIIS), 83–103 (AAMI…WLKF), 113–133 (IGIL…VWLA), and 154–174 (IVLW…LTLL).

It belongs to the PlsY family. Probably interacts with PlsX.

The protein resides in the cell inner membrane. It catalyses the reaction an acyl phosphate + sn-glycerol 3-phosphate = a 1-acyl-sn-glycero-3-phosphate + phosphate. Its pathway is lipid metabolism; phospholipid metabolism. In terms of biological role, catalyzes the transfer of an acyl group from acyl-phosphate (acyl-PO(4)) to glycerol-3-phosphate (G3P) to form lysophosphatidic acid (LPA). This enzyme utilizes acyl-phosphate as fatty acyl donor, but not acyl-CoA or acyl-ACP. This is Glycerol-3-phosphate acyltransferase from Bradyrhizobium sp. (strain BTAi1 / ATCC BAA-1182).